Consider the following 455-residue polypeptide: Argininosuccinate lyase (455 aa).

This sequence belongs to the lyase 1 family. Argininosuccinate lyase subfamily.

The protein localises to the cytoplasm. It carries out the reaction 2-(N(omega)-L-arginino)succinate = fumarate + L-arginine. Its pathway is amino-acid biosynthesis; L-arginine biosynthesis; L-arginine from L-ornithine and carbamoyl phosphate: step 3/3. In Shewanella baltica (strain OS195), this protein is Argininosuccinate lyase.